An 84-amino-acid polypeptide reads, in one-letter code: Large ribosomal subunit protein bL27 (84 aa).

The protein belongs to the bacterial ribosomal protein bL27 family.

This Campylobacter lari (strain RM2100 / D67 / ATCC BAA-1060) protein is Large ribosomal subunit protein bL27.